Consider the following 357-residue polypeptide: Acyl-CoA Delta12-desaturase (357 aa).

Helical transmembrane passes span 49 to 69 and 72 to 92; these read VLWFVLLHAGALYGVYLIFAS and IYTTLYGFLLCELSLLSITAG. Fe cation is bound by residues His94, His99, His131, His134, and His135. The Histidine box-1 motif lies at 94-99; it reads HRLWAH. The short motif at 131–135 is the Histidine box-2 element; sequence HRVHH. Helical transmembrane passes span 195 to 215 and 223 to 245; these read LVPFVSFVIPTLIPMYFWGET and STMFRYCLSLNLTWLVNSAAHMW. Residues His243, His272, His275, and His276 each contribute to the Fe cation site. Positions 272–276 match the Histidine box-3 motif; sequence HNFHH.

Belongs to the fatty acid desaturase type 1 family. The cofactor is Fe(2+).

It localises to the membrane. It carries out the reaction (9Z)-octadecenoyl-CoA + 2 Fe(II)-[cytochrome b5] + O2 + 2 H(+) = (9Z,12Z)-octadecadienoyl-CoA + 2 Fe(III)-[cytochrome b5] + 2 H2O. The catalysed reaction is (9Z)-hexadecenoyl-CoA + 2 Fe(II)-[cytochrome b5] + O2 + 2 H(+) = (9Z,12Z)-hexadecadienoyl-CoA + 2 Fe(III)-[cytochrome b5] + 2 H2O. The enzyme catalyses hexadecanoyl-CoA + 2 Fe(II)-[cytochrome b5] + O2 + 2 H(+) = (9Z)-hexadecenoyl-CoA + 2 Fe(III)-[cytochrome b5] + 2 H2O. In terms of biological role, catalyzes the formation of a Delta12 double bond, acting on monounsaturated fatty acyl substrates like palmitoleoyl-CoA ((9Z)-hexadecenoyl-CoA) and oleoyl-CoA ((9Z)-octadecenoyl-CoA) with higher desaturation activity on (9Z)-octadecenoyl-CoA than (9Z)-hexadecenoyl-CoA. Requires preexisting cis double bond at the Delta9 position of fatty acyls to be able to insert the Delta12 double bond. Delta12-desaturation of (9Z)-octadecenoyl-CoA in insects produces (9Z,12Z)-octadecadienoyl-CoA (linoleoyl-CoA) which may be used to supply precursors of crucial mediators of immunity and reproduction and other essential functions. Can also catalyze Delta9-desaturation on saturated fatty acyl substrates like palmitoyl-CoA (hexadecanoyl-CoA) but with lower efficiency. The chain is Acyl-CoA Delta12-desaturase from Acheta domesticus (House cricket).